Here is a 309-residue protein sequence, read N- to C-terminus: Neuropeptide-like 1 (309 aa).

An N-terminal signal peptide occupies residues 1–28 (MQAVLQSAHSSRRLMLLLSMLLNAAIQP). Positions 29 to 99 (RSIIVSATDD…GEYPDYLEED (71 aa)) are excised as a propeptide. Positions 126–147 (GQLPTAEPGEDYGDADSGEPSE) are disordered. Positions 133 to 144 (PGEDYGDADSGE) are enriched in acidic residues. Tyr164 is subject to Tyrosine amide. An Asparagine amide modification is found at Asn182.

MTYamide peptide: Expressed in the larval CNS (at protein level). NAP peptide: Expressed in the larval CNS (at protein level). IPNamide peptide: Expressed in the ventral ganglion of the third larval instar and adult brain (at protein level).

Its subcellular location is the secreted. Acts as a ligand for the receptor-type guanylate cyclase Gyc76C. Stimulates Gyc76c-dependent cGMP production and modulates the IMD innate immune pathway in response to salt stress by inducing nuclear translocation of NF-kappa-B protein Rel which leads to increased expression of the antimicrobial peptide diptericin. Does not appear to play a role in Gyc76C-mediated wing development. This Drosophila melanogaster (Fruit fly) protein is Neuropeptide-like 1 (Nplp1).